Reading from the N-terminus, the 205-residue chain is Histidine biosynthesis bifunctional protein HisIE (205 aa).

Positions Met-1 to Ile-115 are phosphoribosyl-AMP cyclohydrolase. Positions Leu-116–Lys-205 are phosphoribosyl-ATP pyrophosphohydrolase.

This sequence in the N-terminal section; belongs to the PRA-CH family. The protein in the C-terminal section; belongs to the PRA-PH family.

The protein resides in the cytoplasm. The catalysed reaction is 1-(5-phospho-beta-D-ribosyl)-ATP + H2O = 1-(5-phospho-beta-D-ribosyl)-5'-AMP + diphosphate + H(+). The enzyme catalyses 1-(5-phospho-beta-D-ribosyl)-5'-AMP + H2O = 1-(5-phospho-beta-D-ribosyl)-5-[(5-phospho-beta-D-ribosylamino)methylideneamino]imidazole-4-carboxamide. It participates in amino-acid biosynthesis; L-histidine biosynthesis; L-histidine from 5-phospho-alpha-D-ribose 1-diphosphate: step 2/9. The protein operates within amino-acid biosynthesis; L-histidine biosynthesis; L-histidine from 5-phospho-alpha-D-ribose 1-diphosphate: step 3/9. In Caldanaerobacter subterraneus subsp. tengcongensis (strain DSM 15242 / JCM 11007 / NBRC 100824 / MB4) (Thermoanaerobacter tengcongensis), this protein is Histidine biosynthesis bifunctional protein HisIE.